The following is a 1237-amino-acid chain: MATSVKRKASETSDQNIVKVQKKHSTQDSTTDNGSKENDHSSQAINERTVPEQENDESDTSPESNEVATNTAATRHNGKVTATESYDIHIARETAELFKSNIFKLQIDELLEQVKLKQKHVLKVEKFLHKLYDILQEIPDWEEKSLAEVDSFFKNKIVSVPFVDPKPIPQNTNYKFNYKKPDISLIGSFALKAGIYQPNGSSIDTLLTMPKELFEKKDFLNFRCLHKRSVYLAYLTHHLLILLKKDKLDSFLQLEYSYFDNDPLLPILRISCSKPTGDSLSDYNFYKTRFSINLLIGFPYKVFEPKKLLPNRNCIRIAQESKEQSLPATPLYNFSVLSSSTHENYLKYLYKTKKQTESFVEATVLGRLWLQQRGFSSNMSHSGSLGGFGTFEFTILMAALLNGGGINSNKILLHGFSSYQLFKGVIKYLATMDLCHDGHLQFHSNPENSSSSPASKYIDEGFQTPTLFDKSTKVNILTKMTVSSYQILKEYAGETLRMLNNVVQDQFSNIFLTNISRFDNLKYDLCYDVQLPLGKYNNLETSLAATFGSMERVKFITLENFLAHKITNVARYALGDRIKYIQIEMVGQKSDFPITKRKVYSNTGGNHFNFDFVRVKLIVNPSECDKLVTKGPAHSETMSTEAAVFKNFWGIKSSLRRFKDGSITHCCVWSTSSSEPIISSIVNFALQKHVSKKAQISNETIKKFHNFLPLPNLPSSAKTSVLNLSSFFNLKKSFDDLYKIIFQMKLPLSVKSILPVGSAFRYTSLCQPVPFAYSDPDFFQDVILEFETSPKWPDEITSLEKAKTAFLLKIQEELSANSSTYRSFFSRDESIPYNLEIVTLNILTPEGYGFKFRVLTERDEILYLRAIANARNELKPELEATFLKFTAKYLASVRHTRTLENISHSYQFYSPVVRLFKRWLDTHLLLGHITDELAELIAIKPFVDPAPYFIPGSLENGFLKVLKFISQWNWKDDPLILDLVKPEDDIRDTFETSIGAGSELDSKTMKKLSERLTLAQYKGIQMNFTNLRNSDPNGTHLQFFVASKNDPSGILYSSGIPLPIATRLTALAKVAVNLLQTHGLNQQTINLLFTPGLKDYDFVVDLRTPIGLKSSCGILSATEFKNITNDQAPSNFPENLNDLSEKMDPTYQLVKYLNLKYKNSLILSSRKYIGVNGGEKGDKNVITGLIKPLFKGAHKFRVNLDCNVKPVDDENVILNKEAIFHEIAAFGNDMVINFETD.

A disordered region spans residues 1–78 (MATSVKRKAS…TNTAATRHNG (78 aa)). 2 positions are modified to phosphoserine: serine 10 and serine 58. Position 60 is a phosphothreonine (threonine 60). Polar residues predominate over residues 61–78 (SPESNEVATNTAATRHNG). Serine 64 is subject to Phosphoserine.

The protein belongs to the NRAP family. Interacts with snoRNA U3. Interacts with MPP10. Component of the ribosomal small subunit (SSU) processome composed of at least 40 protein subunits and snoRNA U3. Interacts with UBP10.

It is found in the nucleus. Its subcellular location is the nucleolus. Functionally, involved in nucleolar processing of pre-18S ribosomal RNA and ribosome assembly. The polypeptide is U3 small nucleolar RNA-associated protein 22 (UTP22) (Saccharomyces cerevisiae (strain ATCC 204508 / S288c) (Baker's yeast)).